The sequence spans 159 residues: Probable NADH dehydrogenase [ubiquinone] 1 alpha subcomplex subunit 12 (159 aa).

This sequence belongs to the complex I NDUFA12 subunit family. In terms of assembly, complex I is composed of at least 49 different subunits.

The protein localises to the mitochondrion inner membrane. Accessory subunit of the mitochondrial membrane respiratory chain NADH dehydrogenase (Complex I), that is believed not to be involved in catalysis. Complex I functions in the transfer of electrons from NADH to the respiratory chain. The immediate electron acceptor for the enzyme is believed to be ubiquinone. The sequence is that of Probable NADH dehydrogenase [ubiquinone] 1 alpha subcomplex subunit 12 from Arabidopsis thaliana (Mouse-ear cress).